We begin with the raw amino-acid sequence, 129 residues long: uncharacterized protein (129 aa).

The span at 86–96 (NDGFSSDDEPE) shows a compositional bias: acidic residues. The tract at residues 86–116 (NDGFSSDDEPEEHVILTEDNQGEPSETPQAT) is disordered. The span at 103–116 (EDNQGEPSETPQAT) shows a compositional bias: polar residues.

Belongs to the asfivirus D129L family.

This is an uncharacterized protein from African swine fever virus (strain Badajoz 1971 Vero-adapted) (Ba71V).